The primary structure comprises 535 residues: Ribonuclease Y (535 aa).

Residues 4-24 (IILAMVCALIGLIIGYVAISM) form a helical membrane-spanning segment. A disordered region spans residues 107–145 (TDRASSLDRKDENLSNKEKMLDSKEQSLTDKSRHINERE). The KH domain maps to 225 to 285 (TITTVHLPDD…IRREIARMTL (61 aa)). Residues 351–444 (VLRHSVEVGK…VAAADALSSA (94 aa)) form the HD domain.

This sequence belongs to the RNase Y family.

Its subcellular location is the cell membrane. Its function is as follows. Endoribonuclease that initiates mRNA decay. The sequence is that of Ribonuclease Y from Streptococcus agalactiae serotype Ia (strain ATCC 27591 / A909 / CDC SS700).